The sequence spans 324 residues: Beta-ketoacyl-[acyl-carrier-protein] synthase III (324 aa).

Residues C116 and H251 contribute to the active site. The interval 252 to 256 is ACP-binding; it reads QANLR. N281 is a catalytic residue.

It belongs to the thiolase-like superfamily. FabH family. As to quaternary structure, homodimer.

The protein localises to the cytoplasm. It carries out the reaction malonyl-[ACP] + acetyl-CoA + H(+) = 3-oxobutanoyl-[ACP] + CO2 + CoA. The protein operates within lipid metabolism; fatty acid biosynthesis. Functionally, catalyzes the condensation reaction of fatty acid synthesis by the addition to an acyl acceptor of two carbons from malonyl-ACP. Catalyzes the first condensation reaction which initiates fatty acid synthesis and may therefore play a role in governing the total rate of fatty acid production. Possesses both acetoacetyl-ACP synthase and acetyl transacylase activities. Its substrate specificity determines the biosynthesis of branched-chain and/or straight-chain of fatty acids. This chain is Beta-ketoacyl-[acyl-carrier-protein] synthase III, found in Xylella fastidiosa (strain Temecula1 / ATCC 700964).